A 104-amino-acid chain; its full sequence is N(4)-acetylcytidine amidohydrolase (104 aa).

Residues 6–94 (ITFFQRFQND…IAEIYPNQTQ (89 aa)) form the ASCH domain. The active-site Proton acceptor is the Lys-21. The active-site Nucleophile is Thr-24. Glu-74 functions as the Proton donor in the catalytic mechanism.

This sequence belongs to the N(4)-acetylcytidine amidohydrolase family.

It carries out the reaction N(4)-acetylcytidine + H2O = cytidine + acetate + H(+). The enzyme catalyses N(4)-acetyl-2'-deoxycytidine + H2O = 2'-deoxycytidine + acetate + H(+). It catalyses the reaction N(4)-acetylcytosine + H2O = cytosine + acetate + H(+). Its function is as follows. Catalyzes the hydrolysis of N(4)-acetylcytidine (ac4C). This Salmonella dublin (strain CT_02021853) protein is N(4)-acetylcytidine amidohydrolase (yqfB).